The following is a 377-amino-acid chain: Homoserine O-succinyltransferase (377 aa).

Residues 50–359 (NAVLVCHALS…SSHGHDSFLM (310 aa)) form the AB hydrolase-1 domain. The Nucleophile role is filled by Ser156. Arg226 contributes to the substrate binding site. Residues Asp321 and His354 contribute to the active site. Position 355 (Asp355) interacts with substrate.

Belongs to the AB hydrolase superfamily. MetX family. In terms of assembly, homodimer.

Its subcellular location is the cytoplasm. It catalyses the reaction L-homoserine + succinyl-CoA = O-succinyl-L-homoserine + CoA. It participates in amino-acid biosynthesis; L-methionine biosynthesis via de novo pathway; O-succinyl-L-homoserine from L-homoserine: step 1/1. Functionally, transfers a succinyl group from succinyl-CoA to L-homoserine, forming succinyl-L-homoserine. The chain is Homoserine O-succinyltransferase from Nitrosospira multiformis (strain ATCC 25196 / NCIMB 11849 / C 71).